The primary structure comprises 60 residues: MDHRLLEIVACPVCNGRLYFNKEKLELICKVDGLAYPVRDGIPVLLENEARKLGVDEITQ.

It belongs to the UPF0434 family.

In Pectobacterium carotovorum subsp. carotovorum (strain PC1), this protein is UPF0434 protein PC1_1771.